Reading from the N-terminus, the 244-residue chain is Aspartate/glutamate leucyltransferase (244 aa).

It belongs to the R-transferase family. Bpt subfamily.

It is found in the cytoplasm. The enzyme catalyses N-terminal L-glutamyl-[protein] + L-leucyl-tRNA(Leu) = N-terminal L-leucyl-L-glutamyl-[protein] + tRNA(Leu) + H(+). It catalyses the reaction N-terminal L-aspartyl-[protein] + L-leucyl-tRNA(Leu) = N-terminal L-leucyl-L-aspartyl-[protein] + tRNA(Leu) + H(+). Its function is as follows. Functions in the N-end rule pathway of protein degradation where it conjugates Leu from its aminoacyl-tRNA to the N-termini of proteins containing an N-terminal aspartate or glutamate. This is Aspartate/glutamate leucyltransferase from Paramagnetospirillum magneticum (strain ATCC 700264 / AMB-1) (Magnetospirillum magneticum).